A 386-amino-acid chain; its full sequence is F420 non-reducing hydrogenase I small subunit (386 aa).

The segment at residues 1 to 51 (MVEMSTGTTNLVRTLDSMDFLKMDRRTFMKAVSALGATAFLGTYQTEIVNA) is a signal peptide (tat-type signal). Residues Cys-67, Cys-70, Cys-178, Cys-227, His-273, Cys-276, Cys-296, and Cys-302 each coordinate [4Fe-4S] cluster. Cys-311, Cys-330, and Cys-333 together coordinate [3Fe-4S] cluster.

It belongs to the [NiFe]/[NiFeSe] hydrogenase small subunit family. In terms of assembly, composed of a large subunit (VhoA), a small subunit (VhoG) and a cytochrome subunit (VhoC). [4Fe-4S] cluster is required as a cofactor. The cofactor is [3Fe-4S] cluster. Predicted to be exported by the Tat system. The position of the signal peptide cleavage has not been experimentally proven.

It localises to the cell membrane. It carries out the reaction methanophenazine + H2 = dihydromethanophenazine. Its function is as follows. Part of the F420 non-reducing hydrogenase I complex that catalyzes the reduction of methanophenazine to dihydromethanophenazine. This is F420 non-reducing hydrogenase I small subunit from Methanosarcina mazei (strain ATCC BAA-159 / DSM 3647 / Goe1 / Go1 / JCM 11833 / OCM 88) (Methanosarcina frisia).